Here is a 268-residue protein sequence, read N- to C-terminus: Tryptophan synthase alpha chain (268 aa).

Residues Glu49 and Asp60 each act as proton acceptor in the active site.

The protein belongs to the TrpA family. In terms of assembly, tetramer of two alpha and two beta chains.

The enzyme catalyses (1S,2R)-1-C-(indol-3-yl)glycerol 3-phosphate + L-serine = D-glyceraldehyde 3-phosphate + L-tryptophan + H2O. The protein operates within amino-acid biosynthesis; L-tryptophan biosynthesis; L-tryptophan from chorismate: step 5/5. In terms of biological role, the alpha subunit is responsible for the aldol cleavage of indoleglycerol phosphate to indole and glyceraldehyde 3-phosphate. The polypeptide is Tryptophan synthase alpha chain (Escherichia coli (strain SE11)).